The following is a 63-amino-acid chain: Acrosin inhibitor 1 (63 aa).

In terms of domain architecture, Kazal-like spans 8–63 (FGFPPDCKVYTEACTREYNPICDSAAKTYSNECTFCNEKMNNDADIHFNHFGECEY). Disulfide bonds link Cys-14-Cys-43, Cys-21-Cys-40, and Cys-29-Cys-61.

Seminal plasma.

Its subcellular location is the secreted. Strong inhibitor of acrosin. This Bos taurus (Bovine) protein is Acrosin inhibitor 1.